The chain runs to 93 residues: Small ribosomal subunit protein uS19 (93 aa).

Disordered stretches follow at residues 1–25 (MPRSLKKGPFVDGHLQKKVDDQNTK) and 74–93 (FAPTRTYRGHDKDDRKARRR). Basic and acidic residues-rich tracts occupy residues 14–23 (HLQKKVDDQN) and 81–93 (RGHDKDDRKARRR).

Belongs to the universal ribosomal protein uS19 family.

Protein S19 forms a complex with S13 that binds strongly to the 16S ribosomal RNA. In Beutenbergia cavernae (strain ATCC BAA-8 / DSM 12333 / CCUG 43141 / JCM 11478 / NBRC 16432 / NCIMB 13614 / HKI 0122), this protein is Small ribosomal subunit protein uS19.